Consider the following 169-residue polypeptide: Peptide methionine sulfoxide reductase MsrA 1 (169 aa).

Cysteine 12 is an active-site residue.

This sequence belongs to the MsrA Met sulfoxide reductase family.

It carries out the reaction L-methionyl-[protein] + [thioredoxin]-disulfide + H2O = L-methionyl-(S)-S-oxide-[protein] + [thioredoxin]-dithiol. The enzyme catalyses [thioredoxin]-disulfide + L-methionine + H2O = L-methionine (S)-S-oxide + [thioredoxin]-dithiol. Functionally, has an important function as a repair enzyme for proteins that have been inactivated by oxidation. Catalyzes the reversible oxidation-reduction of methionine sulfoxide in proteins to methionine. The chain is Peptide methionine sulfoxide reductase MsrA 1 (msrA1) from Staphylococcus aureus (strain Mu50 / ATCC 700699).